A 216-amino-acid polypeptide reads, in one-letter code: NADH dehydrogenase [ubiquinone] iron-sulfur protein 7, mitochondrial (216 aa).

A mitochondrion-targeting transit peptide spans 1–37 (MAALAALRLLHPILAVRSGVGAALQVRGVHSSMAADS). The [4Fe-4S] cluster site is built by cysteine 91 and cysteine 92. Residue arginine 114 is modified to Hydroxyarginine. Residues cysteine 156 and cysteine 186 each contribute to the [4Fe-4S] cluster site.

This sequence belongs to the complex I 20 kDa subunit family. In terms of assembly, core subunit of respiratory chain NADH dehydrogenase (Complex I) which is composed of 45 different subunits. This is a component of the iron-sulfur (IP) fragment of the enzyme. It depends on [4Fe-4S] cluster as a cofactor. In terms of processing, hydroxylated ar Arg-114 by NDUFAF5 early in the pathway of assembly of complex I, before the formation of the juncture between peripheral and membrane arms.

The protein resides in the mitochondrion inner membrane. It catalyses the reaction a ubiquinone + NADH + 5 H(+)(in) = a ubiquinol + NAD(+) + 4 H(+)(out). Its function is as follows. Core subunit of the mitochondrial membrane respiratory chain NADH dehydrogenase (Complex I) which catalyzes electron transfer from NADH through the respiratory chain, using ubiquinone as an electron acceptor. Essential for the catalytic activity of complex I. The sequence is that of NADH dehydrogenase [ubiquinone] iron-sulfur protein 7, mitochondrial (NDUFS7) from Bos taurus (Bovine).